We begin with the raw amino-acid sequence, 788 residues long: IQ motif and ubiquitin-like domain-containing protein (788 aa).

The disordered stretch occupies residues 1-89 (MSDPEEERVA…SLGSASGSQD (89 aa)). The segment covering 7-20 (ERVADSTAHYEEAG) has biased composition (basic and acidic residues). The span at 31–54 (EAEGSDVMPEQDDEVQELTTESEE) shows a compositional bias: acidic residues. The span at 68–78 (KSDDSKPREEV) shows a compositional bias: basic and acidic residues. A compositionally biased stretch (polar residues) spans 80–89 (SLGSASGSQD). One can recognise a Ubiquitin-like domain in the interval 127 to 203 (ATVKIVLIPA…VQVEVFSTLP (77 aa)). Positions 334–363 (RLHAVIVIQTSYRRWHAKRYVESLRKQKKL) constitute an IQ domain.

As to quaternary structure, component of the axonemal radial spoke 1 (RS1) complex, at least composed of spoke head proteins RSPH1, RSPH3B, RSPH9 and the cilia-specific component RSPH4A or sperm-specific component RSPH6A, spoke stalk proteins RSPH14, DNAJB13, DYDC1, ROPN1L and NME5, and the anchor protein IQUB. Does not appear to be part of radial spoke complexes 2 or 3 (RS2 or RS3). Interacts with CALM1. Interacts with DNAJB13. Interacts with DYNLL2. Interacts with NME5. Interacts with RSPH3. Interacts with RSPH9. Interacts with ZMYND10. Interacts with calmodulin; the interaction occurs in conditions of low but not high calcium. Expressed in the flagellum of sperm cells and cilia of tracheal epithelial cells (at protein level). High expression in testis, also present in brain and lung.

It is found in the cytoplasm. The protein resides in the cytoskeleton. The protein localises to the flagellum axoneme. It localises to the cell projection. Its subcellular location is the cilium. Anchors the radial spoke 1 (RS1) complex to the A microtubule of outer doublet microtubules in axonemes. The triple radial spokes (RS1, RS2 and RS3) are required to modulate beating of the sperm flagellum. May play a role in inhibiting signaling via MAPK1/ERK2 and MAPK3/ERK1. Additionally, may play a role in the functioning of cilia. Not required for the functioning of tracheal or ependymal cilia. In Mus musculus (Mouse), this protein is IQ motif and ubiquitin-like domain-containing protein (Iqub).